A 246-amino-acid polypeptide reads, in one-letter code: Pyridoxine 5'-phosphate synthase (246 aa).

Asparagine 7 contributes to the 3-amino-2-oxopropyl phosphate binding site. Position 9–10 (9–10) interacts with 1-deoxy-D-xylulose 5-phosphate; sequence DH. 3-amino-2-oxopropyl phosphate is bound at residue arginine 18. Histidine 43 (proton acceptor) is an active-site residue. Arginine 45 and histidine 50 together coordinate 1-deoxy-D-xylulose 5-phosphate. The active-site Proton acceptor is glutamate 70. Residue threonine 100 participates in 1-deoxy-D-xylulose 5-phosphate binding. Histidine 190 (proton donor) is an active-site residue. Residues glycine 191 and 212-213 each bind 3-amino-2-oxopropyl phosphate; that span reads GH.

This sequence belongs to the PNP synthase family. Homooctamer; tetramer of dimers.

The protein localises to the cytoplasm. The enzyme catalyses 3-amino-2-oxopropyl phosphate + 1-deoxy-D-xylulose 5-phosphate = pyridoxine 5'-phosphate + phosphate + 2 H2O + H(+). It functions in the pathway cofactor biosynthesis; pyridoxine 5'-phosphate biosynthesis; pyridoxine 5'-phosphate from D-erythrose 4-phosphate: step 5/5. Functionally, catalyzes the complicated ring closure reaction between the two acyclic compounds 1-deoxy-D-xylulose-5-phosphate (DXP) and 3-amino-2-oxopropyl phosphate (1-amino-acetone-3-phosphate or AAP) to form pyridoxine 5'-phosphate (PNP) and inorganic phosphate. This chain is Pyridoxine 5'-phosphate synthase, found in Bordetella petrii (strain ATCC BAA-461 / DSM 12804 / CCUG 43448).